A 74-amino-acid polypeptide reads, in one-letter code: Protein RALF-like 25 (74 aa).

The first 22 residues, 1 to 22 (MKTFMIILLVICSILIVGRVEA), serve as a signal peptide directing secretion. Intrachain disulfides connect C35-C44 and C62-C68.

Belongs to the plant rapid alkalinization factor (RALF) family.

It localises to the secreted. Cell signaling peptide that may regulate plant stress, growth, and development. Mediates a rapid alkalinization of extracellular space by mediating a transient increase in the cytoplasmic Ca(2+) concentration leading to a calcium-dependent signaling events through a cell surface receptor and a concomitant activation of some intracellular mitogen-activated protein kinases. The chain is Protein RALF-like 25 (RALFL25) from Arabidopsis thaliana (Mouse-ear cress).